We begin with the raw amino-acid sequence, 153 residues long: Transcriptional repressor NrdR (153 aa).

A zinc finger spans residues 3–33 (CPYCNYKESKVIDSRHTDLKSIRRRRECESC). Residues 48–138 (LMVIKKDNSR…VYRQFKDINT (91 aa)) form the ATP-cone domain.

This sequence belongs to the NrdR family. Zn(2+) is required as a cofactor.

Functionally, negatively regulates transcription of bacterial ribonucleotide reductase nrd genes and operons by binding to NrdR-boxes. The sequence is that of Transcriptional repressor NrdR from Clostridioides difficile (strain 630) (Peptoclostridium difficile).